A 102-amino-acid polypeptide reads, in one-letter code: Small ribosomal subunit protein uS10 (102 aa).

Belongs to the universal ribosomal protein uS10 family. Part of the 30S ribosomal subunit.

Its function is as follows. Involved in the binding of tRNA to the ribosomes. The sequence is that of Small ribosomal subunit protein uS10 from Levilactobacillus brevis (strain ATCC 367 / BCRC 12310 / CIP 105137 / JCM 1170 / LMG 11437 / NCIMB 947 / NCTC 947) (Lactobacillus brevis).